A 252-amino-acid chain; its full sequence is PHD finger protein ALFIN-LIKE 7 (252 aa).

The segment at 141-193 is disordered; it reads AKQSKDQSANHNSSRSKSSGGKPRHSESHTKASKMSPPPRKEDESGDEDEDDE. Over residues 149–161 the composition is skewed to low complexity; the sequence is ANHNSSRSKSSGG. Serine 176 carries the phosphoserine modification. Positions 184-193 are enriched in acidic residues; the sequence is ESGDEDEDDE. A PHD-type zinc finger spans residues 195–247; sequence GAVCGACGDNYGGDEFWICCDACEKWFHGKCVKITPAKAEHIKHYKCPSCTTS.

It belongs to the Alfin family. In terms of assembly, interacts with H3K4me3 and to a lesser extent with H3K4me2. In terms of tissue distribution, ubiquitously expressed.

Its subcellular location is the nucleus. Its function is as follows. Histone-binding component that specifically recognizes H3 tails trimethylated on 'Lys-4' (H3K4me3), which mark transcription start sites of virtually all active genes. This chain is PHD finger protein ALFIN-LIKE 7 (AL7), found in Arabidopsis thaliana (Mouse-ear cress).